Here is a 645-residue protein sequence, read N- to C-terminus: Glucans biosynthesis glucosyltransferase H (645 aa).

Polar residues predominate over residues 1 to 13 (MDGTVTPSPTTTA). A disordered region spans residues 1-32 (MDGTVTPSPTTTAMPPVSALDAGTPTLPPEAP). The next 7 membrane-spanning stretches (helical) occupy residues 64–84 (LIGG…SVLW), 98–118 (LFVL…AGFV), 423–443 (APMW…GGGI), 465–485 (AIWI…LGYI), 504–524 (AVSI…VMYL), 559–579 (YGGL…VSPA), and 580–600 (LAAW…VVAL).

This sequence belongs to the glycosyltransferase 2 family. OpgH subfamily.

The protein resides in the cell inner membrane. It functions in the pathway glycan metabolism; osmoregulated periplasmic glucan (OPG) biosynthesis. Involved in the biosynthesis of osmoregulated periplasmic glucans (OPGs). In Xanthomonas euvesicatoria pv. vesicatoria (strain 85-10) (Xanthomonas campestris pv. vesicatoria), this protein is Glucans biosynthesis glucosyltransferase H.